Consider the following 504-residue polypeptide: Glycine--tRNA ligase (504 aa).

The substrate site is built by Arg-99 and Glu-189. ATP-binding positions include Arg-221 to Glu-223, Phe-231 to Leu-236, Glu-306 to Ile-307, and Gly-365 to Arg-368. Leu-236–Glu-240 lines the substrate pocket. A substrate-binding site is contributed by Glu-361–Gly-365.

The protein belongs to the class-II aminoacyl-tRNA synthetase family. As to quaternary structure, homodimer.

It is found in the cytoplasm. It carries out the reaction tRNA(Gly) + glycine + ATP = glycyl-tRNA(Gly) + AMP + diphosphate. Catalyzes the attachment of glycine to tRNA(Gly). The polypeptide is Glycine--tRNA ligase (Deinococcus geothermalis (strain DSM 11300 / CIP 105573 / AG-3a)).